Consider the following 66-residue polypeptide: Large ribosomal subunit protein uL29 (66 aa).

This sequence belongs to the universal ribosomal protein uL29 family.

In Pseudothermotoga lettingae (strain ATCC BAA-301 / DSM 14385 / NBRC 107922 / TMO) (Thermotoga lettingae), this protein is Large ribosomal subunit protein uL29.